The chain runs to 552 residues: HTH-type transcriptional regulator SgrR (552 aa).

One can recognise an HTH marR-type domain in the interval 1–116 (MPSARLQQQF…LVSHLGRSFR (116 aa)). A DNA-binding region (H-T-H motif) is located at residues 26 to 49 (LNELAALLSCSRRHMRTLLNTMQD). The segment at 163-492 (ELEADIAHHW…IDWQADAARW (330 aa)) is solute-binding.

Its function is as follows. Activates the small RNA gene sgrS under glucose-phosphate stress conditions as well as yfdZ. Represses its own transcription under both stress and non-stress conditions. Might act as a sensor of the intracellular accumulation of phosphoglucose by binding these molecules in its C-terminal solute-binding domain. This is HTH-type transcriptional regulator SgrR from Shigella dysenteriae serotype 1 (strain Sd197).